The chain runs to 535 residues: EH domain-containing protein 3 (535 aa).

At M1 the chain carries N-acetylmethionine. The region spanning 55-286 (FDNKPMVLLV…DLFKDIQSLP (232 aa)) is the Dynamin-type G domain. A G1 motif region spans residues 65–72 (GQYSTGKT). 65–72 (GQYSTGKT) serves as a coordination point for ATP. The segment at 91–92 (EP) is G2 motif. Residues 153–156 (DTPG) are G3 motif. The stretch at 198-227 (DEFSEVIKALKNHEDKMRVVLNKADQIETQ) forms a coiled coil. Positions 219–222 (NKAD) are G4 motif. K220 lines the ATP pocket. A region of interest (G5 motif) is located at residue I243. W258 contributes to the ATP binding site. Residue K315 forms a Glycyl lysine isopeptide (Lys-Gly) (interchain with G-Cter in SUMO) linkage. Phosphoserine occurs at positions 349 and 456. Residues 444–532 (DKPMYDEIFY…AHLLPPSKRK (89 aa)) form the EH domain. In terms of domain architecture, EF-hand spans 476-511 (LPNSVLGKIWKLADIDKDGMLDDEEFALANHLIKVK). Ca(2+) contacts are provided by D489, D491, D493, M495, and E500. K511 is covalently cross-linked (Glycyl lysine isopeptide (Lys-Gly) (interchain with G-Cter in SUMO)).

Belongs to the TRAFAC class dynamin-like GTPase superfamily. Dynamin/Fzo/YdjA family. EHD subfamily. In terms of assembly, homooligomer, and heterooligomer with EHD1, EHD2 and EHD4, ATP-binding is required for heterooligomerization. Interacts with PACSIN1. Interacts with PACSIN2. Interacts (via EH domain) with MICALL1. Interacts (via EH domain) with RAB11FIP2. Interacts with ANK2. Interacts with CACNA1GG and CACNA1H.

It localises to the recycling endosome membrane. It is found in the cell membrane. The protein localises to the cell projection. The protein resides in the cilium membrane. Functionally, ATP- and membrane-binding protein that controls membrane reorganization/tubulation upon ATP hydrolysis. In vitro causes tubulation of endocytic membranes. Binding to phosphatidic acid induces its membrane tubulation activity. Plays a role in endocytic transport. Involved in early endosome to recycling endosome compartment (ERC), retrograde early endosome to Golgi, and endosome to plasma membrane (rapid recycling) protein transport. Involved in the regulation of Golgi maintenance and morphology. Involved in the recycling of internalized D1 dopamine receptor. Plays a role in cardiac protein trafficking probably implicating ANK2. Involved in the ventricular membrane targeting of SLC8A1 and CACNA1C and probably the atrial membrane localization of CACNA1GG and CACNA1H implicated in the regulation of atrial myocyte excitability and cardiac conduction. In conjunction with EHD4 may be involved in endocytic trafficking of KDR/VEGFR2 implicated in control of glomerular function. Involved in the rapid recycling of integrin beta-3 implicated in cell adhesion maintenance. Involved in the unidirectional retrograde dendritic transport of endocytosed BACE1 and in efficient sorting of BACE1 to axons implicating a function in neuronal APP processing. Plays a role in the formation of the ciliary vesicle, an early step in cilium biogenesis; possibly sharing redundant functions with Ehd1. In Rattus norvegicus (Rat), this protein is EH domain-containing protein 3.